The chain runs to 310 residues: Olfactory receptor 5P52 (310 aa).

Topologically, residues 1 to 25 (MEAENHTTVAELIILGLTEDPKLCI) are extracellular. N5 is a glycosylation site (N-linked (GlcNAc...) asparagine). The helical transmembrane segment at 26–46 (VFFVIFLGVYIITLVGNISII) threads the bilayer. At 47–54 (TLIRISSQ) the chain is on the cytoplasmic side. Residues 55-75 (LHTPMYLFLSHLAFVDIVFST) form a helical membrane-spanning segment. Topologically, residues 76–99 (SVSVIMLMELLGHGLVLSVATCAA) are extracellular. A disulfide bridge connects residues C97 and C189. A helical membrane pass occupies residues 100–120 (QLCMTVSFGSAECFLLAAMAY). Topologically, residues 121 to 133 (DRYVAICSPLLYS) are cytoplasmic. Residues 134-154 (TLMSSRVCFLLLGISYVGGFV) traverse the membrane as a helical segment. At 155-196 (NGWTFTGCVLSLSFCGPTQINHFFCDFSPLLKVSCSDVSIIG) the chain is on the extracellular side. The chain crosses the membrane as a helical span at residues 197 to 217 (IIPSISSGSIIVVTVFVIAVS). Residues 218–237 (YIYILITILKMRSTEGRHKA) are Cytoplasmic-facing. A helical transmembrane segment spans residues 238 to 258 (FSTCTSHLTAVTLFYGTITVI). The Extracellular portion of the chain corresponds to 259-271 (YVMPKSSYSTEQN). A helical membrane pass occupies residues 272-292 (KVISLFYTVVIPMLNPLIYSL). Residues 293–310 (RNRDVKDALRKAIVRVYS) lie on the Cytoplasmic side of the membrane.

This sequence belongs to the G-protein coupled receptor 1 family.

It localises to the cell membrane. Functionally, potential odorant receptor. This is Olfactory receptor 5P52 from Mus musculus (Mouse).